Here is an 828-residue protein sequence, read N- to C-terminus: Periplasmic nitrate reductase (828 aa).

Positions 1-32 form a signal peptide, tat-type signal; the sequence is MNLSRRDFMKANAAMAAATAAGLSIPVKNVEA. The region spanning 37–93 is the 4Fe-4S Mo/W bis-MGD-type domain; the sequence is IKWDKAVCRFCGTGCAVLVGTKDGRVVASQGDPDAEVNRGLNCIKGYFLPKIMYGKD. [4Fe-4S] cluster-binding residues include cysteine 44, cysteine 47, cysteine 51, and cysteine 79. Mo-bis(molybdopterin guanine dinucleotide) contacts are provided by residues lysine 81, glutamine 148, asparagine 173, cysteine 177, 210-217, 241-245, methionine 371, glutamine 375, asparagine 481, 507-508, lysine 530, aspartate 557, and 717-726; these read WGSNMAEM, STFEH, SD, and TGRVLEHWHT. Phenylalanine 793 is a binding site for substrate. 2 residues coordinate Mo-bis(molybdopterin guanine dinucleotide): asparagine 801 and lysine 818.

The protein belongs to the prokaryotic molybdopterin-containing oxidoreductase family. NasA/NapA/NarB subfamily. In terms of assembly, component of the periplasmic nitrate reductase NapAB complex composed of NapA and NapB. [4Fe-4S] cluster is required as a cofactor. Requires Mo-bis(molybdopterin guanine dinucleotide) as cofactor. In terms of processing, predicted to be exported by the Tat system. The position of the signal peptide cleavage has not been experimentally proven.

It is found in the periplasm. The enzyme catalyses 2 Fe(II)-[cytochrome] + nitrate + 2 H(+) = 2 Fe(III)-[cytochrome] + nitrite + H2O. In terms of biological role, catalytic subunit of the periplasmic nitrate reductase complex NapAB. Receives electrons from NapB and catalyzes the reduction of nitrate to nitrite. The sequence is that of Periplasmic nitrate reductase from Aggregatibacter actinomycetemcomitans (Actinobacillus actinomycetemcomitans).